A 268-amino-acid polypeptide reads, in one-letter code: L-aspartate dehydrogenase (268 aa).

2 residues coordinate NAD(+): alanine 125 and asparagine 191. The active site involves histidine 221.

The protein belongs to the L-aspartate dehydrogenase family.

The catalysed reaction is L-aspartate + NADP(+) + H2O = oxaloacetate + NH4(+) + NADPH + H(+). It carries out the reaction L-aspartate + NAD(+) + H2O = oxaloacetate + NH4(+) + NADH + H(+). It functions in the pathway cofactor biosynthesis; NAD(+) biosynthesis; iminoaspartate from L-aspartate (dehydrogenase route): step 1/1. Specifically catalyzes the NAD or NADP-dependent dehydrogenation of L-aspartate to iminoaspartate. In Ralstonia nicotianae (strain ATCC BAA-1114 / GMI1000) (Ralstonia solanacearum), this protein is L-aspartate dehydrogenase.